Consider the following 357-residue polypeptide: 3-isopropylmalate dehydrogenase (357 aa).

An NAD(+)-binding site is contributed by 76 to 89 (GYQWESLDISVRPE). Substrate is bound by residues Arg96, Arg106, Arg134, and Asp224. 3 residues coordinate Mg(2+): Asp224, Asp248, and Asp252. Residue 282 to 294 (GSAPDIAGQNIAN) coordinates NAD(+).

The protein belongs to the isocitrate and isopropylmalate dehydrogenases family. LeuB type 1 subfamily. As to quaternary structure, homodimer. Requires Mg(2+) as cofactor. The cofactor is Mn(2+).

It localises to the cytoplasm. The enzyme catalyses (2R,3S)-3-isopropylmalate + NAD(+) = 4-methyl-2-oxopentanoate + CO2 + NADH. It participates in amino-acid biosynthesis; L-leucine biosynthesis; L-leucine from 3-methyl-2-oxobutanoate: step 3/4. Its function is as follows. Catalyzes the oxidation of 3-carboxy-2-hydroxy-4-methylpentanoate (3-isopropylmalate) to 3-carboxy-4-methyl-2-oxopentanoate. The product decarboxylates to 4-methyl-2 oxopentanoate. This is 3-isopropylmalate dehydrogenase from Hydrogenovibrio crunogenus (strain DSM 25203 / XCL-2) (Thiomicrospira crunogena).